The following is an 892-amino-acid chain: DNA mismatch repair protein MutS (892 aa).

634-641 (GPNMGGKS) is a binding site for ATP.

Belongs to the DNA mismatch repair MutS family.

Functionally, this protein is involved in the repair of mismatches in DNA. It is possible that it carries out the mismatch recognition step. This protein has a weak ATPase activity. The chain is DNA mismatch repair protein MutS from Paraburkholderia phymatum (strain DSM 17167 / CIP 108236 / LMG 21445 / STM815) (Burkholderia phymatum).